A 3117-amino-acid polypeptide reads, in one-letter code: Centrosome-associated protein 350 (3117 aa).

Positions 1 to 24 (MRSSKSKEVPLPNPRNSQSKDTVQ) are disordered. Residues 14–24 (PRNSQSKDTVQ) show a composition bias toward polar residues. Phosphoserine is present on residues S86, S139, S142, and S218. Disordered stretches follow at residues 249 to 275 (PKALRLTDSSPSSTSTSNSQRLDILKR), 436 to 514 (ILGP…NKQE), 548 to 625 (TVEL…TEQK), and 671 to 722 (LEEP…PPQP). The segment covering 255-267 (TDSSPSSTSTSNS) has biased composition (low complexity). A compositionally biased stretch (basic and acidic residues) spans 469–501 (GRAESDPRLDVLHRHLQRNSERSRSKSRSENNI). S473 and S507 each carry phosphoserine. Residues 563–573 (PRSHSPVKRKP) are compositionally biased toward basic residues. Basic and acidic residues-rich tracts occupy residues 591–625 (YDTDEVRQYIVRQQEERKRKQNEEKKAQKEATEQK) and 694–703 (ESDKENKVQE). Residues 598–645 (QYIVRQQEERKRKQNEEKKAQKEATEQKNKRLQELYRKQKEAFTKVKN) adopt a coiled-coil conformation. S695 carries the phosphoserine modification. Low complexity predominate over residues 705–718 (PPSASSSSDMSLSE). Residue T878 is modified to Phosphothreonine. S939 is modified (phosphoserine). Positions 981 to 992 (SVSEGPLLSEGS) are enriched in low complexity. The tract at residues 981–1002 (SVSEGPLLSEGSLSEEEGDQDG) is disordered. A Phosphoserine modification is found at S1061. A disordered region spans residues 1081-1298 (EDKLDRGTST…GFKPNAPLTD (218 aa)). Residues 1087 to 1102 (GTSTSRPLNATATPLS) show a composition bias toward polar residues. Positions 1135-1144 (QEDHSNRKSA) are enriched in basic and acidic residues. Low complexity-rich tracts occupy residues 1153 to 1172 (TSQHSSGAQSAASSRSSTSS) and 1251 to 1267 (QKTPTSPLSPSSQKSLQ). Position 1253 is a phosphothreonine (T1253). A phosphoserine mark is found at S1256 and S1259. The segment covering 1272 to 1283 (GTSSERSKSSVM) has biased composition (polar residues). The stretch at 1369–1411 (IKAQQQRHERDLALLKLKAEQEALESQRQLEETRNKAAQVHAE) forms a coiled coil. 2 disordered regions span residues 1494–1674 (TRTE…GGQD) and 1794–1854 (KLKS…SRMD). Positions 1503-1512 (PSVSLSQSKE) are enriched in polar residues. Low complexity-rich tracts occupy residues 1522-1535 (YSASYDSYSESSGY) and 1543-1556 (SSGSSRQESPSVPS). Residues 1558 to 1571 (KENEKKLNGEKIES) show a composition bias toward basic and acidic residues. S1613 carries the post-translational modification Phosphoserine. Residues 1631–1647 (ESHRRFNMEKRRGHHDD) show a composition bias toward basic and acidic residues. Phosphoserine occurs at positions 1648 and 1653. Residues 1707–1800 (KALKEKTKAE…LQEKLKSAGE (94 aa)) adopt a coiled-coil conformation. The segment covering 1794–1815 (KLKSAGESKLDSHSDDDTKDNK) has biased composition (basic and acidic residues). S1818 is subject to Phosphoserine. The span at 1827 to 1841 (RSPSPISISSSETSS) shows a compositional bias: low complexity. Residues 1856-1899 (KFLTKREQKLMQRRQHAEELLEWKRRLDAEEAEIRQMEKQALAA) adopt a coiled-coil conformation. Basic and acidic residues predominate over residues 1903-1925 (ELIKPKTPKKELEDQRTEQKEIA). 4 disordered regions span residues 1903 to 2020 (ELIK…QCHL), 2107 to 2221 (ELSQ…ESGD), 2329 to 2356 (LKERQSDQDMNHSPNIQSGKDIHEQKNT), and 2407 to 2432 (KDSQSCRDKPQPMRSSTSGATSFGSN). The residue at position 1936 (S1936) is a Phosphoserine. The span at 1983-2005 (ELESSTSPSKHSLPKSCTSVSKQ) shows a compositional bias: polar residues. Residues 2051 to 2110 (EGRIRALKDELRKRKSVVNQLKKEQKKRQKERLKAQEASLIKQLESYDEFIKKTEAELSQ) adopt a coiled-coil conformation. Polar residues predominate over residues 2111–2129 (DLETSPTAKPQIKTLSSAS). At S2115 the chain carries Phosphoserine. Residues 2141–2170 (HRSETAKNWKSLTESERSRGSLESIAEHVD) are compositionally biased toward basic and acidic residues. Residues 2173-2184 (LSGSERSVSERS) are compositionally biased toward polar residues. A compositionally biased stretch (basic and acidic residues) spans 2191-2201 (RVNEWDSRTED). At T2204 the chain carries Phosphothreonine. Phosphoserine is present on S2206. Composition is skewed to basic and acidic residues over residues 2329–2338 (LKERQSDQDM) and 2407–2417 (KDSQSCRDKPQ). A compositionally biased stretch (polar residues) spans 2419–2432 (MRSSTSGATSFGSN). Residues S2431 and S2460 each carry the phosphoserine modification. The span at 2465 to 2478 (MKSKERSDVEHEQQ) shows a compositional bias: basic and acidic residues. Positions 2465-2485 (MKSKERSDVEHEQQVTESPSL) are disordered. Residues 2517 to 2559 (GETSFAKGFWAGVELDKPEGNNNGTYDGIAYFECKEKHGIFAP) enclose the CAP-Gly domain. At T2689 the chain carries Phosphothreonine. Residues 2719–2752 (LLDLLTREKNQLEAQLKSSLNEEKKSKQQLEKIS) are a coiled coil. 2 positions are modified to phosphoserine: S2830 and S2839.

As to quaternary structure, part of a ternary complex that contains CEP350, CEP43 and MAPRE1. Interacts (via C-terminus) directly with CEP43 (via N-terminus). Interacts with NR1H3, PPARA, PPARD and PPARG. Interacts directly with microtubules. Interacts with the fusion protein CEP43-FGFR1, and by doing so recruits and activates PI3K and PLC-gamma. Interacts with CYLD. Interacts with CFAP157. Interacts with CEP19 (via C-terminus). Interacts with CEP78; promoting CEP78 localization to centrosome and centriole. In terms of processing, phosphorylated during mitosis. In terms of tissue distribution, detected in heart, brain, skeletal muscle, testis, placenta, lung, liver, kidney and pancreas.

The protein resides in the cytoplasm. It localises to the cytoskeleton. Its subcellular location is the microtubule organizing center. It is found in the centrosome. The protein localises to the spindle. The protein resides in the nucleus. It localises to the centriole. Its subcellular location is the cilium basal body. Its function is as follows. Plays an essential role in centriole growth by stabilizing a procentriolar seed composed of at least, SASS6 and CPAP. Required for anchoring microtubules to the centrosomes and for the integrity of the microtubule network. Recruits PPARA to discrete subcellular compartments and thereby modulates PPARA activity. Required for ciliation. In Homo sapiens (Human), this protein is Centrosome-associated protein 350.